Here is a 411-residue protein sequence, read N- to C-terminus: ATP phosphoribosyltransferase 1, chloroplastic (411 aa).

The segment covering Met-1–Tyr-12 has biased composition (polar residues). The interval Met-1–Pro-27 is disordered. The N-terminal 49 residues, Met-1–Cys-49, are a transit peptide targeting the chloroplast. Residues Pro-13–Ile-24 show a composition bias toward low complexity. N-acetylvaline is present on Val-50.

Belongs to the ATP phosphoribosyltransferase family. Long subfamily. Mg(2+) serves as cofactor. Expressed in leaves and at lower levels in roots (at protein level).

Its subcellular location is the plastid. It is found in the chloroplast. It catalyses the reaction 1-(5-phospho-beta-D-ribosyl)-ATP + diphosphate = 5-phospho-alpha-D-ribose 1-diphosphate + ATP. Its pathway is amino-acid biosynthesis; L-histidine biosynthesis; L-histidine from 5-phospho-alpha-D-ribose 1-diphosphate: step 1/9. Feedback inhibited by L-histidine. Catalyzes the condensation of ATP and 5-phosphoribose 1-diphosphate to form N'-(5'-phosphoribosyl)-ATP (PR-ATP). This is ATP phosphoribosyltransferase 1, chloroplastic (HISN1A) from Arabidopsis thaliana (Mouse-ear cress).